We begin with the raw amino-acid sequence, 508 residues long: Pentatricopeptide repeat-containing protein At5g48730, chloroplastic (508 aa).

Positions 1–10 (MVSLSTSTSH) are enriched in polar residues. The tract at residues 1–22 (MVSLSTSTSHAPPLPTNRRTAE) is disordered. The N-terminal 28 residues, 1–28 (MVSLSTSTSHAPPLPTNRRTAERTFTVR), are a transit peptide targeting the chloroplast. PPR repeat units follow at residues 149 to 183 (NVGIYVKLIVMLGKCKQPEKAHELFQEMINEGCVV), 184 to 214 (NHEVYTALVSAYSRSGRFDAAFTLLERMKSS), 220 to 254 (DVHTYSILIKSFLQVFAFDKVQDLLSDMRRQGIRP), 255 to 290 (NTITYNTLIDAYGKAKMFVEMESTLIQMLGEDDCKP), 291 to 325 (DSWTMNSTLRAFGGNGQIEMMENCYEKFQSSGIEP), 326 to 360 (NIRTFNILLDSYGKSGNYKKMSAVMEYMQKYHYSW), 361 to 395 (TIVTYNVVIDAFGRAGDLKQMEYLFRLMQSERIFP), 396 to 430 (SCVTLCSLVRAYGRASKADKIGGVLRFIENSDIRL), 431 to 465 (DLVFFNCLVDAYGRMEKFAEMKGVLELMEKKGFKP), and 466 to 500 (DKITYRTMVKAYRISGMTTHVKELHGVVESVGEAQ).

It belongs to the PPR family. P subfamily.

It is found in the plastid. The protein resides in the chloroplast. This chain is Pentatricopeptide repeat-containing protein At5g48730, chloroplastic, found in Arabidopsis thaliana (Mouse-ear cress).